The sequence spans 416 residues: Phosphoglycerate kinase (416 aa).

Substrate is bound by residues 24–26, R40, 63–66, R126, and R166; these read DLN and HLGR. ATP-binding positions include K216, G304, E335, and 364-367; that span reads GGDS.

The protein belongs to the phosphoglycerate kinase family. As to quaternary structure, monomer.

The protein localises to the cytoplasm. It catalyses the reaction (2R)-3-phosphoglycerate + ATP = (2R)-3-phospho-glyceroyl phosphate + ADP. The protein operates within carbohydrate degradation; glycolysis; pyruvate from D-glyceraldehyde 3-phosphate: step 2/5. This Mycobacterium leprae (strain Br4923) protein is Phosphoglycerate kinase.